A 154-amino-acid chain; its full sequence is Interleukin-2 (154 aa).

The N-terminal stretch at 1–20 (MYKMQLLCCIALTLALMANG) is a signal peptide. A glycan (O-linked (GalNAc...) threonine) is linked at threonine 23. Residues cysteine 78 and cysteine 126 are joined by a disulfide bond.

The protein belongs to the IL-2 family.

The protein localises to the secreted. Cytokine produced by activated CD4-positive helper T-cells and to a lesser extend activated CD8-positive T-cells and natural killer (NK) cells that plays pivotal roles in the immune response and tolerance. Binds to a receptor complex composed of either the high-affinity trimeric IL-2R (IL2RA/CD25, IL2RB/CD122 and IL2RG/CD132) or the low-affinity dimeric IL-2R (IL2RB and IL2RG). Interaction with the receptor leads to oligomerization and conformation changes in the IL-2R subunits resulting in downstream signaling starting with phosphorylation of JAK1 and JAK3. In turn, JAK1 and JAK3 phosphorylate the receptor to form a docking site leading to the phosphorylation of several substrates including STAT5. This process leads to activation of several pathways including STAT, phosphoinositide-3-kinase/PI3K and mitogen-activated protein kinase/MAPK pathways. Functions as a T-cell growth factor and can increase NK-cell cytolytic activity as well. Promotes strong proliferation of activated B-cells and subsequently immunoglobulin production. Plays a pivotal role in regulating the adaptive immune system by controlling the survival and proliferation of regulatory T-cells, which are required for the maintenance of immune tolerance. Moreover, participates in the differentiation and homeostasis of effector T-cell subsets, including Th1, Th2, Th17 as well as memory CD8-positive T-cells. The sequence is that of Interleukin-2 (IL2) from Sus scrofa (Pig).